Reading from the N-terminus, the 399-residue chain is CCA-adding enzyme (399 aa).

Positions 33 and 36 each coordinate ATP. Glycine 33 and arginine 36 together coordinate CTP. 2 residues coordinate Mg(2+): aspartate 46 and aspartate 48. 5 residues coordinate ATP: arginine 117, aspartate 160, arginine 163, arginine 166, and arginine 169. The CTP site is built by arginine 117, aspartate 160, arginine 163, arginine 166, and arginine 169.

This sequence belongs to the tRNA nucleotidyltransferase/poly(A) polymerase family. Bacterial CCA-adding enzyme type 3 subfamily. In terms of assembly, homodimer. Mg(2+) serves as cofactor.

It carries out the reaction a tRNA precursor + 2 CTP + ATP = a tRNA with a 3' CCA end + 3 diphosphate. The enzyme catalyses a tRNA with a 3' CCA end + 2 CTP + ATP = a tRNA with a 3' CCACCA end + 3 diphosphate. Functionally, catalyzes the addition and repair of the essential 3'-terminal CCA sequence in tRNAs without using a nucleic acid template. Adds these three nucleotides in the order of C, C, and A to the tRNA nucleotide-73, using CTP and ATP as substrates and producing inorganic pyrophosphate. tRNA 3'-terminal CCA addition is required both for tRNA processing and repair. Also involved in tRNA surveillance by mediating tandem CCA addition to generate a CCACCA at the 3' terminus of unstable tRNAs. While stable tRNAs receive only 3'-terminal CCA, unstable tRNAs are marked with CCACCA and rapidly degraded. The chain is CCA-adding enzyme from Lactobacillus helveticus (strain DPC 4571).